We begin with the raw amino-acid sequence, 179 residues long: Cytochrome c-type biogenesis protein CcmE (179 aa).

The Cytoplasmic segment spans residues 1–8 (MTPRRKSR). Residues 9-29 (MTVILFVLLGISIASALVLYA) form a helical; Signal-anchor for type II membrane protein membrane-spanning segment. Residues 30 to 179 (LRQNIDLFYT…QKTSMQEGQK (150 aa)) lie on the Periplasmic side of the membrane. Heme is bound by residues histidine 131 and tyrosine 135. The interval 151 to 179 (MGVADLKGESERDRQEKAYQKTSMQEGQK) is disordered. The segment covering 156 to 169 (LKGESERDRQEKAY) has biased composition (basic and acidic residues). The segment covering 170 to 179 (QKTSMQEGQK) has biased composition (polar residues).

Belongs to the CcmE/CycJ family.

Its subcellular location is the cell inner membrane. In terms of biological role, heme chaperone required for the biogenesis of c-type cytochromes. Transiently binds heme delivered by CcmC and transfers the heme to apo-cytochromes in a process facilitated by CcmF and CcmH. The sequence is that of Cytochrome c-type biogenesis protein CcmE from Pasteurella multocida (strain Pm70).